A 344-amino-acid polypeptide reads, in one-letter code: AA9 family lytic polysaccharide monooxygenase J (344 aa).

Residues 1 to 20 (MKSSLLVVLTAGLAVRDAIA) form the signal peptide. Cu(2+)-binding residues include histidine 21 and histidine 99. Cysteine 58 and cysteine 194 are joined by a disulfide. Residues histidine 180 and glutamine 189 each coordinate O2. Cu(2+) is bound at residue tyrosine 191. The disordered stretch occupies residues 272 to 301 (PGGKPASGGSDGNAPEVAEPSGGEGSPSAP). The span at 285 to 301 (APEVAEPSGGEGSPSAP) shows a compositional bias: low complexity. A CBM1 domain is found at 304–341 (CEVAAYGQCGGDQYSGCTQCASGYTCKAVSPPYYSQCA).

It belongs to the polysaccharide monooxygenase AA9 family. Requires Cu(2+) as cofactor.

Its subcellular location is the secreted. The enzyme catalyses [(1-&gt;4)-beta-D-glucosyl]n+m + reduced acceptor + O2 = 4-dehydro-beta-D-glucosyl-[(1-&gt;4)-beta-D-glucosyl]n-1 + [(1-&gt;4)-beta-D-glucosyl]m + acceptor + H2O.. Lytic polysaccharide monooxygenase (LPMO) that depolymerizes crystalline and amorphous polysaccharides via the oxidation of scissile alpha- or beta-(1-4)-glycosidic bonds, yielding C4 oxidation products. Catalysis by LPMOs requires the reduction of the active-site copper from Cu(II) to Cu(I) by a reducing agent and H(2)O(2) or O(2) as a cosubstrate. The protein is AA9 family lytic polysaccharide monooxygenase J (gh61-10) of Neurospora crassa (strain ATCC 24698 / 74-OR23-1A / CBS 708.71 / DSM 1257 / FGSC 987).